The sequence spans 108 residues: Phosphoribosyl-ATP pyrophosphatase (108 aa).

Belongs to the PRA-PH family.

The protein resides in the cytoplasm. It catalyses the reaction 1-(5-phospho-beta-D-ribosyl)-ATP + H2O = 1-(5-phospho-beta-D-ribosyl)-5'-AMP + diphosphate + H(+). It functions in the pathway amino-acid biosynthesis; L-histidine biosynthesis; L-histidine from 5-phospho-alpha-D-ribose 1-diphosphate: step 2/9. The chain is Phosphoribosyl-ATP pyrophosphatase from Pelobacter propionicus (strain DSM 2379 / NBRC 103807 / OttBd1).